A 562-amino-acid chain; its full sequence is Serine/threonine-protein kinase STN7, chloroplastic (562 aa).

The transit peptide at 1 to 45 directs the protein to the chloroplast; it reads MATISPGGAYIGTPSPFLGKKLKPFSLTSPILSFKPTVKLNSSCR. A Protein kinase domain is found at 134–452; that stretch reads FVVGKKLGEG…AKAALAHPYF (319 aa). ATP is bound by residues 140–148 and K167; that span reads LGEGSFGVV. D279 (proton acceptor) is an active-site residue. S526 is modified (phosphoserine). T537 and T541 each carry phosphothreonine.

It belongs to the protein kinase superfamily. Ser/Thr protein kinase family. In terms of processing, phosphorylated.

It is found in the plastid. It localises to the chloroplast thylakoid membrane. The enzyme catalyses L-seryl-[protein] + ATP = O-phospho-L-seryl-[protein] + ADP + H(+). The catalysed reaction is L-threonyl-[protein] + ATP = O-phospho-L-threonyl-[protein] + ADP + H(+). Serine/threonine protein kinase required for state transition by phosphorylating light-harvesting complex II outer antennae (LCHII). State transition plays a central role in response to environmental changes and allows to adjust to changing light conditions via the redistribution of light excitation energy between photosystem II (PSII) and photosystem I (PSI). Phosphorylates the minor light harvesting protein LHCB4.2/CP29 and is involved in the light-dependent phosphorylation of TSP9. Acts as a key component of the long-term response (LTR) signaling pathway. Mediates phosphorylation-dependent PTAC16 subcellular localization to regulate plastid gene expression. The protein is Serine/threonine-protein kinase STN7, chloroplastic (STN7) of Arabidopsis thaliana (Mouse-ear cress).